A 530-amino-acid polypeptide reads, in one-letter code: Glutamate--tRNA ligase (530 aa).

Positions 26–36 match the 'HIGH' region motif; the sequence is PSPTGKAHIGT. Positions 267 to 271 match the 'KMSKS' region motif; the sequence is KLSKR. An ATP-binding site is contributed by Lys270.

Belongs to the class-I aminoacyl-tRNA synthetase family. Glutamate--tRNA ligase type 1 subfamily. Monomer.

It localises to the cytoplasm. The catalysed reaction is tRNA(Glu) + L-glutamate + ATP = L-glutamyl-tRNA(Glu) + AMP + diphosphate. In terms of biological role, catalyzes the attachment of glutamate to tRNA(Glu) in a two-step reaction: glutamate is first activated by ATP to form Glu-AMP and then transferred to the acceptor end of tRNA(Glu). The sequence is that of Glutamate--tRNA ligase from Gloeobacter violaceus (strain ATCC 29082 / PCC 7421).